Here is a 272-residue protein sequence, read N- to C-terminus: Auxin-responsive protein IAA5 (272 aa).

Positions Met1–Ser92 are disordered. Low complexity-rich tracts occupy residues Ser14–Pro33 and Pro40–Gly50. An EAR-like (transcriptional repression) motif is present at residues Leu44–Leu48. One can recognise a PB1 domain in the interval Pro152–Asp256.

This sequence belongs to the Aux/IAA family. Homodimers and heterodimers. In terms of tissue distribution, highly expressed in roots and flowers. Expressed in shoots.

Its subcellular location is the nucleus. In terms of biological role, aux/IAA proteins are short-lived transcriptional factors that function as repressors of early auxin response genes at low auxin concentrations. The protein is Auxin-responsive protein IAA5 (IAA5) of Oryza sativa subsp. indica (Rice).